A 369-amino-acid polypeptide reads, in one-letter code: Leucine-specific-binding protein (369 aa).

The N-terminal stretch at 1–23 (MKRKAKTIIAGIVALAVSQGAMA) is a signal peptide. A disulfide bridge connects residues Cys76 and Cys101.

This sequence belongs to the leucine-binding protein family.

It is found in the periplasm. This protein is a component of the leucine-specific transport system, which is one of the two periplasmic binding protein-dependent transport systems of the high-affinity transport of the branched-chain amino acids. The polypeptide is Leucine-specific-binding protein (livK) (Salmonella typhi).